Here is a 416-residue protein sequence, read N- to C-terminus: Queuine tRNA-ribosyltransferase accessory subunit 2 (416 aa).

4 residues coordinate Zn(2+): Cys-323, Cys-325, Cys-328, and His-354.

Belongs to the queuine tRNA-ribosyltransferase family. QTRT2 subfamily. In terms of assembly, heterodimer of a catalytic subunit and an accessory subunit. Requires Zn(2+) as cofactor.

The protein resides in the cytoplasm. Functionally, non-catalytic subunit of the queuine tRNA-ribosyltransferase (TGT) that catalyzes the base-exchange of a guanine (G) residue with queuine (Q) at position 34 (anticodon wobble position) in tRNAs with GU(N) anticodons (tRNA-Asp, -Asn, -His and -Tyr), resulting in the hypermodified nucleoside queuosine (7-(((4,5-cis-dihydroxy-2-cyclopenten-1-yl)amino)methyl)-7-deazaguanosine). This chain is Queuine tRNA-ribosyltransferase accessory subunit 2, found in Drosophila mojavensis (Fruit fly).